Here is a 138-residue protein sequence, read N- to C-terminus: Basic phospholipase A2 canebraxin B (138 aa).

The N-terminal stretch at 1–16 (MRALWIVAVLLVAVEG) is a signal peptide. 7 cysteine pairs are disulfide-bonded: cysteine 42–cysteine 131, cysteine 44–cysteine 60, cysteine 59–cysteine 111, cysteine 65–cysteine 138, cysteine 66–cysteine 104, cysteine 73–cysteine 97, and cysteine 91–cysteine 102. Tyrosine 43, glycine 45, and glycine 47 together coordinate Ca(2+). Histidine 63 is a catalytic residue. Residue aspartate 64 coordinates Ca(2+). The active site involves aspartate 105.

This sequence belongs to the phospholipase A2 family. Group II subfamily. As to quaternary structure, heterodimer of an acidic subunit and a basic chain. The acidic subunit is non-toxic, without enzymatic activity and comprises 3 peptides that are cross-linked by 7 disulfide bridges. The basic subunit is toxic, has phospholipase A2 activity and is composed of a single chain. Ca(2+) is required as a cofactor. Expressed by the venom gland.

It localises to the secreted. The catalysed reaction is a 1,2-diacyl-sn-glycero-3-phosphocholine + H2O = a 1-acyl-sn-glycero-3-phosphocholine + a fatty acid + H(+). Its function is as follows. Snake venom phospholipase A2 (PLA2) that shows presynaptic neurotoxicity. PLA2 catalyzes the calcium-dependent hydrolysis of the 2-acyl groups in 3-sn-phosphoglycerides. In Crotalus horridus (Timber rattlesnake), this protein is Basic phospholipase A2 canebraxin B.